Consider the following 101-residue polypeptide: UPF0473 protein EF_1204 (101 aa).

This sequence belongs to the UPF0473 family.

This Enterococcus faecalis (strain ATCC 700802 / V583) protein is UPF0473 protein EF_1204.